We begin with the raw amino-acid sequence, 191 residues long: Small ribosomal subunit protein uS5 (191 aa).

The segment at 1-20 is disordered; it reads MAAERERGGRERSRDREERD. In terms of domain architecture, S5 DRBM spans 23-86; the sequence is FVDKLVHINR…EAAKRNLTRV (64 aa).

The protein belongs to the universal ribosomal protein uS5 family. Part of the 30S ribosomal subunit. Contacts proteins S4 and S8.

In terms of biological role, with S4 and S12 plays an important role in translational accuracy. Its function is as follows. Located at the back of the 30S subunit body where it stabilizes the conformation of the head with respect to the body. The polypeptide is Small ribosomal subunit protein uS5 (Rhodopseudomonas palustris (strain HaA2)).